Consider the following 93-residue polypeptide: Putative pterin-4-alpha-carbinolamine dehydratase (93 aa).

The protein belongs to the pterin-4-alpha-carbinolamine dehydratase family.

The enzyme catalyses (4aS,6R)-4a-hydroxy-L-erythro-5,6,7,8-tetrahydrobiopterin = (6R)-L-erythro-6,7-dihydrobiopterin + H2O. This is Putative pterin-4-alpha-carbinolamine dehydratase from Synechococcus sp. (strain WH7803).